The primary structure comprises 95 residues: Large ribosomal subunit protein bL27 (95 aa).

A propeptide spanning residues methionine 1 to phenylalanine 6 is cleaved from the precursor. The disordered stretch occupies residues methionine 1–arginine 25.

The protein belongs to the bacterial ribosomal protein bL27 family. In terms of processing, the N-terminus is cleaved by ribosomal processing cysteine protease Prp.

In Thermoanaerobacter pseudethanolicus (strain ATCC 33223 / 39E) (Clostridium thermohydrosulfuricum), this protein is Large ribosomal subunit protein bL27.